A 205-amino-acid chain; its full sequence is Guanylate kinase (205 aa).

Residues 5–184 (GLLIVLSGPS…AVQKIKGIVE (180 aa)) enclose the Guanylate kinase-like domain. Residue 12–19 (GPSGVGKG) participates in ATP binding.

It belongs to the guanylate kinase family.

It is found in the cytoplasm. The catalysed reaction is GMP + ATP = GDP + ADP. In terms of biological role, essential for recycling GMP and indirectly, cGMP. The sequence is that of Guanylate kinase from Listeria monocytogenes serotype 4b (strain F2365).